Consider the following 326-residue polypeptide: 3-methyl-2-oxobutanoate hydroxymethyltransferase 1 (326 aa).

Residues Asp-52, Asp-91, and Glu-122 each contribute to the Mg(2+) site. Residues 52–53 (DS) and Asp-91 each bind 3-methyl-2-oxobutanoate. Glu-189 acts as the Proton acceptor in catalysis.

Belongs to the PanB family. Homodecamer; pentamer of dimers. The cofactor is Mg(2+).

It localises to the cytoplasm. It catalyses the reaction 3-methyl-2-oxobutanoate + (6R)-5,10-methylene-5,6,7,8-tetrahydrofolate + H2O = 2-dehydropantoate + (6S)-5,6,7,8-tetrahydrofolate. Its pathway is cofactor biosynthesis; (R)-pantothenate biosynthesis; (R)-pantoate from 3-methyl-2-oxobutanoate: step 1/2. Functionally, catalyzes the reversible reaction in which hydroxymethyl group from 5,10-methylenetetrahydrofolate is transferred onto alpha-ketoisovalerate to form ketopantoate. This is 3-methyl-2-oxobutanoate hydroxymethyltransferase 1 from Bradyrhizobium diazoefficiens (strain JCM 10833 / BCRC 13528 / IAM 13628 / NBRC 14792 / USDA 110).